We begin with the raw amino-acid sequence, 339 residues long: Inositol 2-dehydrogenase 2 (339 aa).

Belongs to the Gfo/Idh/MocA family. As to quaternary structure, homotetramer.

The enzyme catalyses myo-inositol + NAD(+) = scyllo-inosose + NADH + H(+). Involved in the oxidation of myo-inositol (MI) to 2-keto-myo-inositol (2KMI or 2-inosose). The protein is Inositol 2-dehydrogenase 2 of Saccharopolyspora erythraea (strain ATCC 11635 / DSM 40517 / JCM 4748 / NBRC 13426 / NCIMB 8594 / NRRL 2338).